The following is a 515-amino-acid chain: 1-pyrroline-5-carboxylate dehydrogenase 1 (515 aa).

Catalysis depends on residues Glu286 and Cys320.

The protein belongs to the aldehyde dehydrogenase family. RocA subfamily.

The catalysed reaction is L-glutamate 5-semialdehyde + NAD(+) + H2O = L-glutamate + NADH + 2 H(+). Its pathway is amino-acid degradation; L-proline degradation into L-glutamate; L-glutamate from L-proline: step 2/2. The polypeptide is 1-pyrroline-5-carboxylate dehydrogenase 1 (rocA1) (Halalkalibacterium halodurans (strain ATCC BAA-125 / DSM 18197 / FERM 7344 / JCM 9153 / C-125) (Bacillus halodurans)).